A 139-amino-acid polypeptide reads, in one-letter code: Large ribosomal subunit protein uL16c (139 aa).

A compositionally biased stretch (basic residues) spans 1 to 17 (MLSPKKTKFRKQHRGRM). A disordered region spans residues 1–23 (MLSPKKTKFRKQHRGRMKGSASK).

Belongs to the universal ribosomal protein uL16 family. In terms of assembly, part of the 50S ribosomal subunit.

It localises to the plastid. It is found in the chloroplast. The chain is Large ribosomal subunit protein uL16c from Porphyra purpurea (Red seaweed).